We begin with the raw amino-acid sequence, 405 residues long: Phosphopentomutase (405 aa).

Residues D10, D303, H308, D344, H345, and H356 each contribute to the Mn(2+) site.

This sequence belongs to the phosphopentomutase family. It depends on Mn(2+) as a cofactor.

It is found in the cytoplasm. The catalysed reaction is 2-deoxy-alpha-D-ribose 1-phosphate = 2-deoxy-D-ribose 5-phosphate. The enzyme catalyses alpha-D-ribose 1-phosphate = D-ribose 5-phosphate. Its pathway is carbohydrate degradation; 2-deoxy-D-ribose 1-phosphate degradation; D-glyceraldehyde 3-phosphate and acetaldehyde from 2-deoxy-alpha-D-ribose 1-phosphate: step 1/2. Functionally, isomerase that catalyzes the conversion of deoxy-ribose 1-phosphate (dRib-1-P) and ribose 1-phosphate (Rib-1-P) to deoxy-ribose 5-phosphate (dRib-5-P) and ribose 5-phosphate (Rib-5-P), respectively. The polypeptide is Phosphopentomutase (Shewanella woodyi (strain ATCC 51908 / MS32)).